Here is a 269-residue protein sequence, read N- to C-terminus: NAD kinase (269 aa).

Catalysis depends on Asp45, which acts as the Proton acceptor. Residues Asp45–Gly46, Asn122–Glu123, Arg149, Asp151, and Ala186 contribute to the NAD(+) site.

The protein belongs to the NAD kinase family. The cofactor is a divalent metal cation.

Its subcellular location is the cytoplasm. It carries out the reaction NAD(+) + ATP = ADP + NADP(+) + H(+). Involved in the regulation of the intracellular balance of NAD and NADP, and is a key enzyme in the biosynthesis of NADP. Catalyzes specifically the phosphorylation on 2'-hydroxyl of the adenosine moiety of NAD to yield NADP. The protein is NAD kinase of Staphylococcus epidermidis (strain ATCC 35984 / DSM 28319 / BCRC 17069 / CCUG 31568 / BM 3577 / RP62A).